Consider the following 141-residue polypeptide: HTH-type transcriptional repressor NsrR (141 aa).

Positions 2–129 (QLTNFTDYGL…DNYTLADLVE (128 aa)) constitute an HTH rrf2-type domain. Residues 28-51 (ISEVTDVYGVSRNHMVKIINQLSR) constitute a DNA-binding region (H-T-H motif). Residues Cys91, Cys96, and Cys102 each contribute to the [2Fe-2S] cluster site.

The cofactor is [2Fe-2S] cluster.

Nitric oxide-sensitive repressor of genes involved in protecting the cell against nitrosative stress. May require iron for activity. The polypeptide is HTH-type transcriptional repressor NsrR (Shigella boydii serotype 18 (strain CDC 3083-94 / BS512)).